A 779-amino-acid chain; its full sequence is Catalase-peroxidase (779 aa).

The tryptophyl-tyrosyl-methioninium (Trp-Tyr) (with M-296) cross-link spans 148 to 270 (WHSAGTYRIT…LGAVQMGLIY (123 aa)). H149 (proton acceptor) is an active-site residue. Positions 270-296 (YVNPEGPNGKPDPIAAAKDIRETFFRM) form a cross-link, tryptophyl-tyrosyl-methioninium (Tyr-Met) (with W-148). Residue H311 participates in heme b binding.

Belongs to the peroxidase family. Peroxidase/catalase subfamily. Homodimer or homotetramer. It depends on heme b as a cofactor. In terms of processing, formation of the three residue Trp-Tyr-Met cross-link is important for the catalase, but not the peroxidase activity of the enzyme.

The enzyme catalyses H2O2 + AH2 = A + 2 H2O. It carries out the reaction 2 H2O2 = O2 + 2 H2O. Functionally, bifunctional enzyme with both catalase and broad-spectrum peroxidase activity. The chain is Catalase-peroxidase from Bradyrhizobium diazoefficiens (strain JCM 10833 / BCRC 13528 / IAM 13628 / NBRC 14792 / USDA 110).